Here is a 240-residue protein sequence, read N- to C-terminus: uncharacterized protein (240 aa).

The protein resides in the mitochondrion. This is an uncharacterized protein from Arabidopsis thaliana (Mouse-ear cress).